We begin with the raw amino-acid sequence, 77 residues long: Acyl carrier protein (77 aa).

Residues 2 to 77 (SDVADRVKKI…DAVKFISEAS (76 aa)) enclose the Carrier domain. Position 37 is an O-(pantetheine 4'-phosphoryl)serine (S37).

The protein belongs to the acyl carrier protein (ACP) family. In terms of processing, 4'-phosphopantetheine is transferred from CoA to a specific serine of apo-ACP by AcpS. This modification is essential for activity because fatty acids are bound in thioester linkage to the sulfhydryl of the prosthetic group.

It localises to the cytoplasm. It participates in lipid metabolism; fatty acid biosynthesis. Its function is as follows. Carrier of the growing fatty acid chain in fatty acid biosynthesis. This chain is Acyl carrier protein, found in Ruegeria sp. (strain TM1040) (Silicibacter sp.).